Reading from the N-terminus, the 237-residue chain is tRNA (guanine-N(7)-)-methyltransferase (237 aa).

S-adenosyl-L-methionine is bound by residues E68, E93, D120, and D143. D143 is a catalytic residue. Residues K147, D179, and 216 to 219 (TKFE) contribute to the substrate site.

The protein belongs to the class I-like SAM-binding methyltransferase superfamily. TrmB family.

It catalyses the reaction guanosine(46) in tRNA + S-adenosyl-L-methionine = N(7)-methylguanosine(46) in tRNA + S-adenosyl-L-homocysteine. The protein operates within tRNA modification; N(7)-methylguanine-tRNA biosynthesis. Its function is as follows. Catalyzes the formation of N(7)-methylguanine at position 46 (m7G46) in tRNA. This is tRNA (guanine-N(7)-)-methyltransferase from Shewanella pealeana (strain ATCC 700345 / ANG-SQ1).